Here is a 394-residue protein sequence, read N- to C-terminus: Argininosuccinate synthase (394 aa).

Residues 7–15 (AYSGGLDTS) and alanine 34 contribute to the ATP site. L-citrulline is bound by residues tyrosine 85 and serine 90. Glycine 115 is a binding site for ATP. L-aspartate-binding residues include threonine 117, asparagine 121, and aspartate 122. L-citrulline is bound at residue asparagine 121. 5 residues coordinate L-citrulline: arginine 125, serine 176, serine 185, glutamate 261, and tyrosine 273.

Belongs to the argininosuccinate synthase family. Type 1 subfamily. As to quaternary structure, homotetramer.

Its subcellular location is the cytoplasm. The catalysed reaction is L-citrulline + L-aspartate + ATP = 2-(N(omega)-L-arginino)succinate + AMP + diphosphate + H(+). It functions in the pathway amino-acid biosynthesis; L-arginine biosynthesis; L-arginine from L-ornithine and carbamoyl phosphate: step 2/3. This Ehrlichia ruminantium (strain Gardel) protein is Argininosuccinate synthase.